Consider the following 256-residue polypeptide: Triosephosphate isomerase (256 aa).

10–12 (NWK) serves as a coordination point for substrate. His97 serves as the catalytic Electrophile. The Proton acceptor role is filled by Glu169. Substrate contacts are provided by residues Gly175, Ser214, and 235–236 (GG).

The protein belongs to the triosephosphate isomerase family. As to quaternary structure, homodimer.

It localises to the cytoplasm. The enzyme catalyses D-glyceraldehyde 3-phosphate = dihydroxyacetone phosphate. The protein operates within carbohydrate biosynthesis; gluconeogenesis. Its pathway is carbohydrate degradation; glycolysis; D-glyceraldehyde 3-phosphate from glycerone phosphate: step 1/1. Involved in the gluconeogenesis. Catalyzes stereospecifically the conversion of dihydroxyacetone phosphate (DHAP) to D-glyceraldehyde-3-phosphate (G3P). This is Triosephosphate isomerase from Haemophilus ducreyi (strain 35000HP / ATCC 700724).